The sequence spans 2424 residues: Voltage-dependent P/Q-type calcium channel subunit alpha-1A (2424 aa).

Over 1–98 (MARFGDEMPA…KYAKKITEWP (98 aa)) the chain is Cytoplasmic. Residues 85 to 363 (NVVRKYAKKI…LVLGVLSGEF (279 aa)) form an I repeat. The chain crosses the membrane as a helical span at residues 99–117 (PFEYMILATIIANCIVLAL). At 118–135 (EQHLPDDDKTPMSERLDD) the chain is on the extracellular side. Residues 136 to 155 (TEPYFIGIFCFEAGIKIIAL) form a helical membrane-spanning segment. At 156-167 (GFAFHKGSYLRN) the chain is on the cytoplasmic side. The helical transmembrane segment at 168–185 (GWNVMDFVVVLTGILATV) threads the bilayer. Residues 186–190 (GTEFD) are Extracellular-facing. Residues 191–209 (LRTLRAVRVLRPLKLVSGI) form a helical membrane-spanning segment. The Cytoplasmic portion of the chain corresponds to 210–228 (PSLQVVLKSIMKAMIPLLQ). The helical transmembrane segment at 229 to 248 (IGLLLFFAILIFAIIGLEFY) threads the bilayer. Topologically, residues 249 to 335 (MGKFHTTCFE…NSNDASGNTW (87 aa)) are extracellular. A glycan (N-linked (GlcNAc...) asparagine) is linked at Asn-283. Glu-318 serves as a coordination point for Ca(2+). Residues 336–360 (NWLYFIPLIIIGSFFMLNLVLGVLS) form a helical membrane-spanning segment. Over 361 to 487 (GEFAKERERV…FYIRRMVKTQ (127 aa)) the chain is Cytoplasmic. Residues 383–400 (QQIERELNGYMEWISKAE) are binding to the beta subunit. Phosphothreonine is present on Thr-409. A phosphoserine mark is found at Ser-448 and Ser-451. Residues 473-717 (ERRMRFYIRR…VFLAIAVDNL (245 aa)) form an II repeat. The chain crosses the membrane as a helical span at residues 488–506 (AFYWTVLSLVALNTLCVAI). The Extracellular segment spans residues 507 to 521 (VHYNQPEWLSDFLYY). A helical membrane pass occupies residues 522–541 (AEFIFLGLFMSEMFIKMYGL). Topologically, residues 542–549 (GTRPYFHS) are cytoplasmic. Residues 550–568 (SFNCFDCGVIIGSIFEVIW) traverse the membrane as a helical segment. Residues 569 to 578 (AVIKPGTSFG) lie on the Extracellular side of the membrane. Residues 579–597 (ISVLRALRLLRIFKVTKYW) traverse the membrane as a helical segment. Over 598–616 (ASLRNLVVSLLNSMKSIIS) the chain is Cytoplasmic. The helical transmembrane segment at 617–636 (LLFLLFLFIVVFALLGMQLF) threads the bilayer. At 637–689 (GGQFNFDEGTPPTNFDTFPAAIMTVFQILTGEDWNEVMYDGIKSQGGVQGGMV) the chain is on the extracellular side. Glu-668 provides a ligand contact to Ca(2+). A helical transmembrane segment spans residues 690-714 (FSIYFIVLTLFGNYTLLNVFLAIAV). Over 715–1253 (DNLANAQELT…RLCHYILNLR (539 aa)) the chain is Cytoplasmic. Residues Ser-750, Ser-753, and Ser-790 each carry the phosphoserine modification. The interval 819–1229 (HLDRPLVVDP…GEDGPKPMPP (411 aa)) is disordered. 3 stretches are compositionally biased toward basic and acidic residues: residues 893 to 912 (ELSR…REGG), 922 to 931 (EAERGKAGDP), and 969 to 996 (RPGE…RSGE). The segment covering 1053–1065 (PNLSTTRPIQQDL) has biased composition (polar residues). Ser-1091 and Ser-1104 each carry phosphoserine. A compositionally biased stretch (low complexity) spans 1110–1140 (SSTDPAGPTPATAANPQNSTASRRTPNNPGN). Polar residues predominate over residues 1151 to 1168 (ENSLIVTNPSTAQTNSAK). Basic and acidic residues predominate over residues 1204-1214 (LPKKEDEKKEE). An III repeat occupies 1240–1523 (NPLRRLCHYI…IFVALIIITF (284 aa)). The chain crosses the membrane as a helical span at residues 1254–1272 (YFEMCILMVIAMSSIALAA). At 1273–1288 (EDPVQPNAPRNNVLRY) the chain is on the extracellular side. Residues 1289 to 1308 (FDYVFTGVFTFEMVIKMIDL) form a helical membrane-spanning segment. The Cytoplasmic portion of the chain corresponds to 1309-1320 (GLVLHQGAYFRD). A helical membrane pass occupies residues 1321–1339 (LWNILDFIVVSGALVAFAF). The Extracellular segment spans residues 1340–1350 (TGNSKGKDINT). Residues 1351–1369 (IKSLRVLRVLRPLKTIKRL) traverse the membrane as a helical segment. Residues 1370-1388 (PKLKAVFDCVVNSLKNVFN) are Cytoplasmic-facing. Residues 1389–1408 (ILIVYMLFMFIFAVVAVQLF) traverse the membrane as a helical segment. Residues 1409-1495 (KGKFFHCTDE…QGPSPGYRME (87 aa)) lie on the Extracellular side of the membrane. Glu-1469 is a Ca(2+) binding site. Residues 1496–1520 (MSIFYVVYFVVFPFFFVNIFVALII) traverse the membrane as a helical segment. The Cytoplasmic segment spans residues 1521 to 1575 (ITFQEQGDKMMEEYSLEKNERACIDFAISAKPLTRHMPQNKQSFQYRMWQFVVSP). The stretch at 1560 to 1823 (NKQSFQYRMW…LFVAVIMDNF (264 aa)) is one IV repeat. A helical transmembrane segment spans residues 1576 to 1604 (PFEYTIMAMIALNTIVLMMKFYGASVAYD). Over 1605 to 1609 (NALKV) the chain is Extracellular. The chain crosses the membrane as a helical span at residues 1610 to 1629 (FNIVFTSLFSLECLLKVLAF). Residues 1630–1637 (GILNYFRD) are Cytoplasmic-facing. The helical transmembrane segment at 1638 to 1656 (AWNIFDFVTVLGSITDILV) threads the bilayer. At 1657–1665 (TEFGNNFIN) the chain is on the extracellular side. The N-linked (GlcNAc...) asparagine glycan is linked to Asn-1665. The chain crosses the membrane as a helical span at residues 1666–1684 (LSFLRLFRAARLIKLLRQG). Topologically, residues 1685 to 1703 (YTIRILLWTFVQSFKALPY) are cytoplasmic. A helical membrane pass occupies residues 1704 to 1723 (VCLLIAMLFFIYAIIGMQVF). Topologically, residues 1724–1795 (GNIGIDMEDE…ILTPECGNEF (72 aa)) are extracellular. A helical transmembrane segment spans residues 1796–1820 (AYFYFVSFIFLCSFLMLNLFVAVIM). The Cytoplasmic segment spans residues 1821–2424 (DNFEYLTRDS…GGPRASAPSP (604 aa)). A Phosphothreonine modification is found at Thr-1993. Residues 1997-2424 (FQRMEPPPDE…GGPRASAPSP (428 aa)) are disordered. Residues 2037–2053 (SWVTQRAQEMFQKTGTW) show a composition bias toward polar residues. 6 positions are modified to phosphoserine: Ser-2054, Ser-2072, Ser-2084, Ser-2086, Ser-2127, and Ser-2148. The span at 2074–2090 (EMREMSQDGYSDSEHCL) shows a compositional bias: basic and acidic residues. Basic and acidic residues-rich tracts occupy residues 2142–2159 (RRLD…ENQR) and 2200–2210 (PSREREQERGR). A compositionally biased stretch (basic residues) spans 2211-2229 (PKDRKHRPHHHHHHHHHPG). Positions 2249–2262 (VARVRPARAPALAH) are enriched in low complexity. The segment covering 2280–2305 (RRARRPRPRQRRRPRRRRGGGGRALR) has biased composition (basic residues).

It belongs to the calcium channel alpha-1 subunit (TC 1.A.1.11) family. CACNA1A subfamily. Voltage-dependent calcium channels are multisubunit complexes, consisting of alpha-1, alpha-2, beta and delta subunits in a 1:1:1:1 ratio. The channel activity is directed by the pore-forming and voltage-sensitive alpha-1 subunit. In many cases, this subunit is sufficient to generate voltage-sensitive calcium channel activity. The auxiliary subunits beta and alpha-2/delta linked by a disulfide bridge regulate the channel activity. Interacts with CABP1. Interacts with the spider omega-agatoxin-IVA (AC P30288). Interacts with TSPOAP1. In terms of tissue distribution, brain specific. Purkinje cells contain predominantly P-type VSCC, the Q-type being a prominent calcium current in cerebellar granule cells.

It is found in the cell membrane. It catalyses the reaction Ca(2+)(in) = Ca(2+)(out). Voltage-sensitive calcium channels (VSCC) mediate the entry of calcium ions into excitable cells and are also involved in a variety of calcium-dependent processes, including muscle contraction, hormone or neurotransmitter release, gene expression, cell motility, cell division and cell death. The isoform alpha-1A gives rise to P and/or Q-type calcium currents. P/Q-type calcium channels belong to the 'high-voltage activated' (HVA) group and are specifically blocked by the spider omega-agatoxin-IVA (AC P54282). They are however insensitive to dihydropyridines (DHP). The polypeptide is Voltage-dependent P/Q-type calcium channel subunit alpha-1A (CACNA1A) (Oryctolagus cuniculus (Rabbit)).